Consider the following 151-residue polypeptide: UPF0208 membrane protein YfbV (151 aa).

2 helical membrane-spanning segments follow: residues Y46–L65 and L69–G91.

This sequence belongs to the UPF0208 family.

The protein resides in the cell inner membrane. This Salmonella choleraesuis (strain SC-B67) protein is UPF0208 membrane protein YfbV.